A 368-amino-acid chain; its full sequence is Nicotinamide/nicotinic acid mononucleotide adenylyltransferase (368 aa).

Positions 1-14 (MHTMNGDNFANSFP) are enriched in polar residues. A disordered region spans residues 1–25 (MHTMNGDNFANSFPKNPLLSRNSSS). Position 36 is a phosphoserine (Ser36). Positions 47 to 78 (AKEHEERIRRPSVNRAWQKNSTSGGPSVSLEK) are disordered. The span at 61–72 (RAWQKNSTSGGP) shows a compositional bias: polar residues. A phosphoserine mark is found at Ser75 and Ser85. NAD(+)-binding residues include Ser135 and Phe136. His143 is a binding site for ATP. The NAD(+) site is built by Thr215, Gly250, Asp252, Trp263, Arg282, and Asn313. 318-321 (TKVR) is an ATP binding site.

The protein belongs to the eukaryotic NMN adenylyltransferase family. A divalent metal cation is required as a cofactor.

The protein resides in the cytoplasm. The protein localises to the nucleus. The catalysed reaction is beta-nicotinamide D-ribonucleotide + ATP + H(+) = diphosphate + NAD(+). It carries out the reaction nicotinate beta-D-ribonucleotide + ATP + H(+) = deamido-NAD(+) + diphosphate. Its pathway is cofactor biosynthesis; NAD(+) biosynthesis; deamido-NAD(+) from nicotinate D-ribonucleotide: step 1/1. The protein operates within cofactor biosynthesis; NAD(+) biosynthesis; NAD(+) from nicotinamide D-ribonucleotide: step 1/1. In terms of biological role, catalyzes the formation of NAD(+) from nicotinamide mononucleotide (NMN) and ATP. Can also use the deamidated form; nicotinic acid mononucleotide (NaMN) as substrate to form deamido-NAD(+) (NaAD). Key enzyme in both de novo and salvage pathways for NAD(+) biosynthesis. This Schizosaccharomyces pombe (strain 972 / ATCC 24843) (Fission yeast) protein is Nicotinamide/nicotinic acid mononucleotide adenylyltransferase.